The primary structure comprises 243 residues: Protein GIGAS CELL1 (243 aa).

Interacts with APC/C activators such as FZR1, FZR2, FZR3, CDC20.1 and CDC20.5. Phosphorylated by CDKA-1 in complex with CYCA1-2. As to expression, expressed in rapidly dividing tissues such as shoot apical meristem and young leaves. Associated with cell division but also with specific cell types.

Functionally, negative regulator of the anaphase-promoting complex/cyclosome (APC/C) ubiquitin ligase required for proper mitotic and meiotic progression and cell fate determination. Involved in entry into both meiosis I and meiosis II. Prevents endomitosis by preferentially inhibiting APC/C(CDC20). Required for megagametophyte and endosperm development. Triggers mitotic cyclins (e.g. CYCB1-1 and CYCB1-2) accumulation. Confers immunity to bacterial pathogens (e.g. Pseudomonas syringae pv. tomato DC3000), which is associated with increased expression of disease resistance (R) genes. GIG1 and PANS1 are part of a network linking centromere cohesion and cell cycle progression through control of APC/C activity. The polypeptide is Protein GIGAS CELL1 (GIG1) (Arabidopsis thaliana (Mouse-ear cress)).